The following is a 202-amino-acid chain: Outer-membrane lipoprotein carrier protein (202 aa).

The signal sequence occupies residues 1 to 21 (MKRLLVACCFLSGLISASALA).

The protein belongs to the LolA family. In terms of assembly, monomer.

The protein localises to the periplasm. In terms of biological role, participates in the translocation of lipoproteins from the inner membrane to the outer membrane. Only forms a complex with a lipoprotein if the residue after the N-terminal Cys is not an aspartate (The Asp acts as a targeting signal to indicate that the lipoprotein should stay in the inner membrane). This Yersinia pestis bv. Antiqua (strain Antiqua) protein is Outer-membrane lipoprotein carrier protein.